We begin with the raw amino-acid sequence, 489 residues long: Phosphoglucosamine mutase (489 aa).

Serine 136 (phosphoserine intermediate) is an active-site residue. Serine 136, aspartate 275, aspartate 277, and aspartate 279 together coordinate Mg(2+). Serine 136 is subject to Phosphoserine.

The protein belongs to the phosphohexose mutase family. It depends on Mg(2+) as a cofactor. In terms of processing, activated by phosphorylation.

The catalysed reaction is alpha-D-glucosamine 1-phosphate = D-glucosamine 6-phosphate. Functionally, catalyzes the conversion of glucosamine-6-phosphate to glucosamine-1-phosphate. The protein is Phosphoglucosamine mutase of Trichodesmium erythraeum (strain IMS101).